The chain runs to 163 residues: Nucleotide-binding protein HDEF_1968 (163 aa).

The protein belongs to the YajQ family.

In terms of biological role, nucleotide-binding protein. The chain is Nucleotide-binding protein HDEF_1968 from Hamiltonella defensa subsp. Acyrthosiphon pisum (strain 5AT).